A 147-amino-acid chain; its full sequence is DNA-directed RNA polymerase subunit 6 homolog (147 aa).

The interval 20 to 39 (ETEEENFVDSEEESEDKDEI) is disordered.

Belongs to the archaeal RpoK/eukaryotic RPB6 RNA polymerase subunit family. As to quaternary structure, part of the viral DNA-directed RNA polymerase that consists of 8 polII-like subunits (RPB1, RPB2, RPB3, RPB5, RPB6, RPB7, RPB9, RPB10), a capping enzyme and a termination factor.

The protein resides in the host cytoplasm. It localises to the virion. Component of the DNA-directed RNA polymerase (RNAP) that catalyzes the transcription in the cytoplasm of viral DNA into RNA using the four ribonucleoside triphosphates as substrates. The polypeptide is DNA-directed RNA polymerase subunit 6 homolog (Ornithodoros (relapsing fever ticks)).